The chain runs to 282 residues: Sirohydrochlorin cobaltochelatase CbiKC (282 aa).

The active-site Proton acceptor is the His-166. Co(2+)-binding residues include His-166 and His-228.

The protein belongs to the CbiK family.

Its subcellular location is the cytoplasm. It carries out the reaction Co-sirohydrochlorin + 2 H(+) = sirohydrochlorin + Co(2+). The catalysed reaction is siroheme + 2 H(+) = sirohydrochlorin + Fe(2+). It participates in cofactor biosynthesis; adenosylcobalamin biosynthesis; cob(II)yrinate a,c-diamide from sirohydrochlorin (anaerobic route): step 1/10. Its pathway is porphyrin-containing compound metabolism; siroheme biosynthesis; siroheme from sirohydrochlorin: step 1/1. Its function is as follows. Catalyzes the insertion of Co(2+) into sirohydrochlorin as part of the anaerobic pathway to cobalamin biosynthesis. To a lesser extent, is also able to insert Fe(2+) into sirohydrochlorin, yielding siroheme. This Nitratidesulfovibrio vulgaris (strain ATCC 29579 / DSM 644 / CCUG 34227 / NCIMB 8303 / VKM B-1760 / Hildenborough) (Desulfovibrio vulgaris) protein is Sirohydrochlorin cobaltochelatase CbiKC (cbiKc).